The sequence spans 183 residues: Apo-citrate lyase phosphoribosyl-dephospho-CoA transferase (183 aa).

This sequence belongs to the CitX family.

It catalyses the reaction apo-[citrate lyase ACP] + 2'-(5''-triphospho-alpha-D-ribosyl)-3'-dephospho-CoA = holo-[citrate lyase ACP] + diphosphate. Its function is as follows. Transfers 2-(5''-triphosphoribosyl)-3'-dephosphocoenzyme-A on a serine residue to the apo-acyl carrier protein (gamma chain) of the citrate lyase to yield holo-acyl carrier protein. The polypeptide is Apo-citrate lyase phosphoribosyl-dephospho-CoA transferase (Shigella flexneri serotype 5b (strain 8401)).